The primary structure comprises 444 residues: Bifunctional protein GlmU (444 aa).

The pyrophosphorylase stretch occupies residues 1-226; that stretch reads MTDSTHRTTA…EAELAGVNSR (226 aa). UDP-N-acetyl-alpha-D-glucosamine contacts are provided by residues 13-16, Lys-27, Gln-75, and 80-81; these read LAAG and GT. Asp-103 contacts Mg(2+). Positions 139, 153, 168, and 224 each coordinate UDP-N-acetyl-alpha-D-glucosamine. Asn-224 serves as a coordination point for Mg(2+). The linker stretch occupies residues 227–247; that stretch reads SELARAEATLQTRLRNAAMDA. The segment at 248–444 is N-acetyltransferase; the sequence is GVTLVAPETV…QSLKARKEQG (197 aa). Arg-313 and Lys-331 together coordinate UDP-N-acetyl-alpha-D-glucosamine. The Proton acceptor role is filled by His-343. The UDP-N-acetyl-alpha-D-glucosamine site is built by Tyr-346 and Asn-357. Acetyl-CoA-binding positions include Ala-360, 366–367, Ser-385, Ala-403, and Arg-420; that span reads NY.

In the N-terminal section; belongs to the N-acetylglucosamine-1-phosphate uridyltransferase family. This sequence in the C-terminal section; belongs to the transferase hexapeptide repeat family. As to quaternary structure, homotrimer. Mg(2+) is required as a cofactor.

It localises to the cytoplasm. The catalysed reaction is alpha-D-glucosamine 1-phosphate + acetyl-CoA = N-acetyl-alpha-D-glucosamine 1-phosphate + CoA + H(+). The enzyme catalyses N-acetyl-alpha-D-glucosamine 1-phosphate + UTP + H(+) = UDP-N-acetyl-alpha-D-glucosamine + diphosphate. It functions in the pathway nucleotide-sugar biosynthesis; UDP-N-acetyl-alpha-D-glucosamine biosynthesis; N-acetyl-alpha-D-glucosamine 1-phosphate from alpha-D-glucosamine 6-phosphate (route II): step 2/2. It participates in nucleotide-sugar biosynthesis; UDP-N-acetyl-alpha-D-glucosamine biosynthesis; UDP-N-acetyl-alpha-D-glucosamine from N-acetyl-alpha-D-glucosamine 1-phosphate: step 1/1. Its pathway is bacterial outer membrane biogenesis; LPS lipid A biosynthesis. Functionally, catalyzes the last two sequential reactions in the de novo biosynthetic pathway for UDP-N-acetylglucosamine (UDP-GlcNAc). The C-terminal domain catalyzes the transfer of acetyl group from acetyl coenzyme A to glucosamine-1-phosphate (GlcN-1-P) to produce N-acetylglucosamine-1-phosphate (GlcNAc-1-P), which is converted into UDP-GlcNAc by the transfer of uridine 5-monophosphate (from uridine 5-triphosphate), a reaction catalyzed by the N-terminal domain. This is Bifunctional protein GlmU from Gluconobacter oxydans (strain 621H) (Gluconobacter suboxydans).